We begin with the raw amino-acid sequence, 598 residues long: Aspartate--tRNA(Asp/Asn) ligase (598 aa).

L-aspartate is bound at residue Glu-177. The aspartate stretch occupies residues 201-204 (QLFK). An L-aspartate-binding site is contributed by Arg-223. Residues 223–225 (RDE) and Gln-232 each bind ATP. Residue His-456 coordinates L-aspartate. Glu-493 is a binding site for ATP. Position 500 (Arg-500) interacts with L-aspartate. Residue 545–548 (GLDR) coordinates ATP.

This sequence belongs to the class-II aminoacyl-tRNA synthetase family. Type 1 subfamily. In terms of assembly, homodimer.

It localises to the cytoplasm. The catalysed reaction is tRNA(Asx) + L-aspartate + ATP = L-aspartyl-tRNA(Asx) + AMP + diphosphate. Aspartyl-tRNA synthetase with relaxed tRNA specificity since it is able to aspartylate not only its cognate tRNA(Asp) but also tRNA(Asn). Reaction proceeds in two steps: L-aspartate is first activated by ATP to form Asp-AMP and then transferred to the acceptor end of tRNA(Asp/Asn). This Prochlorococcus marinus (strain AS9601) protein is Aspartate--tRNA(Asp/Asn) ligase.